Here is a 389-residue protein sequence, read N- to C-terminus: Leucine aminopeptidase 1 (389 aa).

The first 19 residues, 1-19 (MKLPALLTLGVAASTMVLA), serve as a signal peptide directing secretion. Positions 20–88 (AIAPDQVPLN…LPKVFPTPAV (69 aa)) are excised as a propeptide. 5 N-linked (GlcNAc...) asparagine glycosylation sites follow: N96, N119, N149, N164, and N181. Zn(2+) is bound by residues H189 and D208. Residue N233 is glycosylated (N-linked (GlcNAc...) asparagine). Zn(2+)-binding residues include E247 and D274. A disulfide bond links C323 and C327. H356 is a binding site for Zn(2+).

This sequence belongs to the peptidase M28 family. M28E subfamily. As to quaternary structure, monomer. It depends on Zn(2+) as a cofactor.

It localises to the secreted. Its function is as follows. Extracellular aminopeptidase that allows assimilation of proteinaceous substrates. This Paracoccidioides brasiliensis (strain Pb18) protein is Leucine aminopeptidase 1 (LAP1).